The following is a 434-amino-acid chain: Nucleobase transporter PlUacP (434 aa).

Transmembrane regions (helical) follow at residues 9–29 (LGFQ…LIVG), 39–59 (LAYL…LQVW), 63–83 (FFGI…GPMI), 93–113 (AIYG…GFFG), 118–138 (FFPP…LIPV), 159–179 (ALSF…TGFI), 181–201 (AISI…MGKV), 218–238 (FYFG…LVAI), 306–326 (VVIT…IAAL), 327–347 (TLLI…GMVV), 365–385 (LLII…PNLF), and 394–414 (ILTS…NFLF).

It belongs to the nucleobase:cation symporter-2 (NCS2) (TC 2.A.40) family.

Its subcellular location is the cell membrane. Its activity is regulated as follows. Inhibited by the proton gradient disruptor carbonyl cyanide m-chlorophenylhydrazone (CCCP), but not by the sodium gradient disruptor ouabain. Hypoxanthine, xanthine, cytosine and uric acid act as competitive inhibitors. Its function is as follows. Uptake of the purines adenine and guanine, and the pyrimidine uracil. Transport is probably proton-dependent. The chain is Nucleobase transporter PlUacP from Paenibacillus larvae subsp. larvae (strain NRRL B-3650 / LMG 16245).